A 124-amino-acid chain; its full sequence is Small ribosomal subunit protein uS12 (124 aa).

Asp-89 is subject to 3-methylthioaspartic acid. The segment at 105–124 (TGVDSRMQGRSKYGTKKPKK) is disordered.

This sequence belongs to the universal ribosomal protein uS12 family. As to quaternary structure, part of the 30S ribosomal subunit. Contacts proteins S8 and S17. May interact with IF1 in the 30S initiation complex.

Its function is as follows. With S4 and S5 plays an important role in translational accuracy. Functionally, interacts with and stabilizes bases of the 16S rRNA that are involved in tRNA selection in the A site and with the mRNA backbone. Located at the interface of the 30S and 50S subunits, it traverses the body of the 30S subunit contacting proteins on the other side and probably holding the rRNA structure together. The combined cluster of proteins S8, S12 and S17 appears to hold together the shoulder and platform of the 30S subunit. The protein is Small ribosomal subunit protein uS12 of Vesicomyosocius okutanii subsp. Calyptogena okutanii (strain HA).